The primary structure comprises 273 residues: MLMRTATPLDQPRAIGSARVSSKRVNGGSGIDGLRQSGALKLLFPTSRDIVQATLINTAGGVTGGDRFDIDGCAGAGSRLTITTQAAERAYGAQIGQTGEIKTNLKAEAGSRLFWLPQETILYKDAAIDRQLGVDLSTGAEFLMVEPVLFGRRAMGEDVSTLAFRDRIDIRRDGAPIYLDAIHLQGDVATHLDRPAIADGARAMASLVWVSAEAEGRIDALRRIIGRSGGVSMLHPDVLVMRLLAADGYILRRSLIPVLDLITDDTLPQSWRL.

The segment at 1–29 is disordered; sequence MLMRTATPLDQPRAIGSARVSSKRVNGGS.

It belongs to the UreD family. UreD, UreF and UreG form a complex that acts as a GTP-hydrolysis-dependent molecular chaperone, activating the urease apoprotein by helping to assemble the nickel containing metallocenter of UreC. The UreE protein probably delivers the nickel.

It localises to the cytoplasm. Functionally, required for maturation of urease via the functional incorporation of the urease nickel metallocenter. The polypeptide is Urease accessory protein UreD (Roseobacter denitrificans (strain ATCC 33942 / OCh 114) (Erythrobacter sp. (strain OCh 114))).